The following is an 855-amino-acid chain: Protein KRI1 homolog (855 aa).

Disordered regions lie at residues 47 to 67 (VSES…VDPK), 82 to 117 (KDPC…KAKP), 130 to 196 (EHNG…KTKE), 312 to 342 (SLRR…MKEL), 424 to 453 (YDPR…CDYD), and 589 to 855 (KSLY…KKDN). Positions 48–64 (SESEFDSDSSSSEEDEV) are enriched in acidic residues. The span at 82 to 91 (KDPCIYDKGT) shows a compositional bias: basic and acidic residues. S95, S97, S98, S137, and S138 each carry phosphoserine. Residues 160 to 176 (EEERRLKAEFRKVMNKE) show a composition bias toward basic and acidic residues. S179 bears the Phosphoserine mark. Residues 307 to 362 (RTIEQSLRRTDDKRKEKRKELKERKDQEKQQKMKELELVKEMKRKEIDEKIRKLKA) are a coiled coil. A compositionally biased stretch (acidic residues) spans 441–452 (CEDDDFNMDCDY). Positions 609–619 (VTPAEATAPAE) are enriched in low complexity. Over residues 630 to 640 (KSKRKRLKRKA) the composition is skewed to basic residues. 2 stretches are compositionally biased toward basic and acidic residues: residues 650-664 (VLKE…KEAD) and 674-692 (SSKK…DANQ). Composition is skewed to polar residues over residues 720-748 (VQNG…TTES), 756-773 (SNGN…QQRQ), and 792-805 (ANGT…NQKP). Positions 812-826 (KKTNNFKAKNKQNNN) are enriched in low complexity. Over residues 842–855 (RKFHKREKYGKKDN) the composition is skewed to basic residues.

The protein belongs to the KRI1 family.

In Drosophila melanogaster (Fruit fly), this protein is Protein KRI1 homolog.